Consider the following 136-residue polypeptide: Small ribosomal subunit protein uS11c (136 aa).

This sequence belongs to the universal ribosomal protein uS11 family. In terms of assembly, part of the 30S ribosomal subunit.

Its subcellular location is the plastid. It localises to the chloroplast. The sequence is that of Small ribosomal subunit protein uS11c from Helianthus annuus (Common sunflower).